A 478-amino-acid polypeptide reads, in one-letter code: Glutamine synthetase (478 aa).

Lys-14 participates in a covalent cross-link: Isoglutamyl lysine isopeptide (Lys-Gln) (interchain with Q-Cter in protein Pup). In terms of domain architecture, GS beta-grasp spans 16-100 (ENVEYVDIRF…MNFFVHDPFT (85 aa)). Residues 108–478 (PRNVARKAEN…PYEFSLYYDV (371 aa)) enclose the GS catalytic domain. The Mg(2+) site is built by Glu-133 and Glu-135. Glu-214 is a binding site for ATP. Residues Glu-219 and Glu-227 each contribute to the Mg(2+) site. 230-232 (YKF) provides a ligand contact to ATP. L-glutamate contacts are provided by residues 271–272 (NG) and Gly-272. His-276 contacts Mg(2+). Residues 278 to 280 (HQS) and Ser-280 each bind ATP. The L-glutamate site is built by Arg-329, Glu-335, and Arg-347. Residues Arg-347, Arg-352, and Lys-361 each contribute to the ATP site. A Mg(2+)-binding site is contributed by Glu-366. L-glutamate is bound at residue Arg-368. At Tyr-406 the chain carries O-AMP-tyrosine.

This sequence belongs to the glutamine synthetase family. Oligomer of 12 subunits arranged in the form of two hexagons. The cofactor is Mg(2+).

The protein localises to the cytoplasm. The enzyme catalyses L-glutamate + NH4(+) + ATP = L-glutamine + ADP + phosphate + H(+). Its activity is regulated as follows. When cellular nitrogen levels are high, the C-terminal adenylyl transferase (AT) of GlnE inhibits GlnA by covalent transfer of an adenylyl group from ATP to Tyr-406. Conversely, when nitrogen levels are low, the N-terminal adenylyl removase (AR) of GlnE activates GlnA by removing the adenylyl group by phosphorolysis. The fully adenylated enzyme complex is inactive. In terms of biological role, involved in nitrogen metabolism via ammonium assimilation. Catalyzes the ATP-dependent biosynthesis of glutamine from glutamate and ammonia. In Mycolicibacterium smegmatis (strain ATCC 700084 / mc(2)155) (Mycobacterium smegmatis), this protein is Glutamine synthetase.